The following is a 1073-amino-acid chain: Collagen alpha-2(I) chain (1073 aa).

The disordered stretch occupies residues 1-939 (APDPGPGPMG…PGPAGGGYDV (939 aa)). Composition is skewed to low complexity over residues 100-148 (EPGA…AAGP), 178-187 (EPGPNGAVGP), and 194-215 (PGNN…AGAP). Residues 217–227 (FPGPRGGPGPQ) are compositionally biased toward pro residues. Low complexity predominate over residues 229–239 (PQGAAGQRGLA). The segment covering 246–255 (GVKGDGGPKG) has biased composition (gly residues). 4 stretches are compositionally biased toward low complexity: residues 296-315 (MPGA…PGDA), 321-348 (SGPA…AGPA), 386-399 (APGP…TGAT), and 411-423 (QGAA…QGLP). Over residues 424–433 (GPAGGAGEAG) the composition is skewed to gly residues. The segment covering 458 to 468 (NPGAAGASGPQ) has biased composition (low complexity). The segment covering 481–508 (GTDGGKGEPGAAGAAGGPGHQGPGGMPG) has biased composition (gly residues). Residues 519–530 (KGEKGEAGHRGP) are compositionally biased toward basic and acidic residues. 2 stretches are compositionally biased toward low complexity: residues 561 to 575 (SGSF…ARGA) and 584 to 597 (PAGA…PGAD). The span at 607-616 (GPSGGKGESG) shows a compositional bias: gly residues. 3 stretches are compositionally biased toward low complexity: residues 617 to 642 (PAGP…TGAR), 653 to 680 (FPGA…PAGK), and 708 to 729 (SGEK…SGPL). The span at 745-757 (GSPGGAGGVGEPG) shows a compositional bias: gly residues. A compositionally biased stretch (low complexity) spans 758 to 774 (RVGPAGPAGARGNLGLP). Positions 811–820 (GESGPGGAAG) are enriched in gly residues. Low complexity predominate over residues 821–836 (AVGPAGARGAAGPSGP). Residues 837-851 (RGEKGVAGEKGERGL) show a composition bias toward basic and acidic residues. 2 stretches are compositionally biased toward low complexity: residues 857–876 (LQGM…AGPN) and 906–917 (PGARGPPGYVGP). Residues 918–932 (AGPPGSPGLPGPPGP) are compositionally biased toward pro residues. Residues 1039 to 1073 (RTNKPSRLPLLDLAPLDLGGADQEFGLDLGPVCFK) enclose the Fibrillar collagen NC1 domain.

Belongs to the fibrillar collagen family.

Its subcellular location is the secreted. It is found in the extracellular space. It localises to the extracellular matrix. The protein is Collagen alpha-2(I) chain of Epinephelus aeneus (White grouper).